An 862-amino-acid chain; its full sequence is Cadherin-related family member 5 (862 aa).

Positions 1 to 28 (MGAPALLWPPLLLPLLTVLFGHLPGTLA) are cleaved as a signal peptide. At 29 to 671 (QAQVCSANQT…GQRFSTVDMA (643 aa)) the chain is on the extracellular side. Asparagine 36, asparagine 45, asparagine 135, asparagine 173, asparagine 201, asparagine 311, asparagine 408, asparagine 438, and asparagine 479 each carry an N-linked (GlcNAc...) asparagine glycan. 4 Cadherin domains span residues 40–127 (FTMN…APEF), 128–240 (PFTI…TPWF), 252–357 (IQAQ…PLQF), and 358–462 (SQSL…PPST). The disordered stretch occupies residues 452–658 (IQVSEREPPS…TTGPISGVGE (207 aa)). Positions 461 to 500 (STESPTPPEAGGTTGPSSNTTLETPSTSGTSQGPATTSSG) are enriched in low complexity. Residues 529–652 (LGISTSPQTA…GTSQPTTTGP (124 aa)) are compositionally biased toward polar residues. Repeat copies occupy residues 545–575 (TQTPKPGTSQPMVPTPGASTSSQPATPSGSS), 576–606 (TQTPKPGTSQPMVPTPGASTSSQPATPSGSS), and 607–636 (TQTPRPGTSQPMVPTPGASTSSQPATPSGS). A 4 X 31 AA approximate tandem repeats region spans residues 545-648 (TQTPKPGTSQ…TPKPGTSQPT (104 aa)). Residues 637 to 648 (TQTPKPGTSQPT) form a 4; truncated repeat. The helical transmembrane segment at 672-692 (VLGGVLGALLLLALIFLIILI) threads the bilayer. Topologically, residues 693-862 (HKHYRHRFTC…LGAVADNTYV (170 aa)) are cytoplasmic. Residues 693–862 (HKHYRHRFTC…LGAVADNTYV (170 aa)) are mediates interaction with USH1C and MYO7B and is required for proper localization to microvilli tips and function in microvilli organization. Disordered stretches follow at residues 706–803 (KAKE…EGGY) and 821–862 (LNEP…NTYV). Serine 729, serine 751, and serine 755 each carry phosphoserine. Residues 739–768 (GPEPVQPPLRPPSPMSSSPTPPSSMPPSPQ) are compositionally biased toward pro residues. Position 758 is a phosphothreonine (threonine 758). Phosphoserine occurs at positions 766 and 783. The segment covering 791 to 801 (LTKERRPEGEG) has biased composition (basic and acidic residues). Threonine 825 carries the phosphothreonine modification. Over residues 827–837 (DVDSASASGSE) the composition is skewed to low complexity. Serine 832, serine 834, and serine 836 each carry phosphoserine.

In terms of assembly, part of the IMAC/intermicrovillar adhesion complex/intermicrovillar tip-link complex composed of ANKS4B, MYO7B, USH1C, CDHR2 and CDHR5. Interacts (via cytoplasmic domain) with USH1C and MYO7B; required for proper localization of CDHR5 to microvilli tips and its function in brush border differentiation. Post-translationally, N- and O-glycosylated. Expressed predominantly in kidney. Also detected in lung and small intestine.

The protein resides in the apical cell membrane. The protein localises to the cell projection. It localises to the microvillus membrane. Its function is as follows. Intermicrovillar adhesion molecule that forms, via its extracellular domain, calcium-dependent heterophilic complexes with CDHR2 on adjacent microvilli. Thereby, controls the packing of microvilli at the apical membrane of epithelial cells. Through its cytoplasmic domain, interacts with microvillus cytoplasmic proteins to form the intermicrovillar adhesion complex/IMAC. This complex plays a central role in microvilli and epithelial brush border differentiation. In Rattus norvegicus (Rat), this protein is Cadherin-related family member 5.